A 298-amino-acid polypeptide reads, in one-letter code: Tyrosine recombinase XerD (298 aa).

The Core-binding (CB) domain maps to 3-88; sequence ALDHPLIDQF…GLRGFFRYLL (86 aa). The region spanning 109 to 292 is the Tyr recombinase domain; sequence PLPKSLSEAD…AKARLQQLHA (184 aa). Residues arginine 149, lysine 173, histidine 244, arginine 247, and histidine 270 contribute to the active site. Tyrosine 279 functions as the O-(3'-phospho-DNA)-tyrosine intermediate in the catalytic mechanism.

This sequence belongs to the 'phage' integrase family. XerD subfamily. As to quaternary structure, forms a cyclic heterotetrameric complex composed of two molecules of XerC and two molecules of XerD.

Its subcellular location is the cytoplasm. Site-specific tyrosine recombinase, which acts by catalyzing the cutting and rejoining of the recombining DNA molecules. The XerC-XerD complex is essential to convert dimers of the bacterial chromosome into monomers to permit their segregation at cell division. It also contributes to the segregational stability of plasmids. The sequence is that of Tyrosine recombinase XerD from Pseudomonas putida (strain ATCC 47054 / DSM 6125 / CFBP 8728 / NCIMB 11950 / KT2440).